Consider the following 304-residue polypeptide: MSNVLELTIPASTANLGVGFDSIGMALDKFLHLSVKETSGTKWEYIFHDDASKQLPTDETNFIYHVAQQVASKYSVDLPILCIEMRSDIPLARGLGSSASALVGAIYIANYFGDIQLSKHEVLQLATEIEGHPDNVAPTIYGGLIAGFYNDVSKETSVAHIDIPDVDVIVTIPTYELKTEASRRALPQKLTHSEAVKSSAISNTMICALAQHNYELAGKLMQQDGFHEPYRQHLIAEFDEVKTIASQHNAYATVISGAGPTILIFSRKENSGELVRSLNSQVVSCHSELVDINISGVKERIVYQ.

90-100 provides a ligand contact to ATP; that stretch reads PLARGLGSSAS.

Belongs to the GHMP kinase family. Homoserine kinase subfamily.

The protein localises to the cytoplasm. The catalysed reaction is L-homoserine + ATP = O-phospho-L-homoserine + ADP + H(+). Its pathway is amino-acid biosynthesis; L-threonine biosynthesis; L-threonine from L-aspartate: step 4/5. Catalyzes the ATP-dependent phosphorylation of L-homoserine to L-homoserine phosphate. The polypeptide is Homoserine kinase (Staphylococcus aureus (strain JH9)).